Here is a 392-residue protein sequence, read N- to C-terminus: Ribonuclease D (392 aa).

Residues 12–178 (LIETTEALAA…PVYEGLRARL (167 aa)) form the 3'-5' exonuclease domain. Residues 217–298 (NRRQLALVKA…ASTKAIPDAE (82 aa)) enclose the HRDC domain.

The protein belongs to the RNase D family. It depends on a divalent metal cation as a cofactor.

The protein resides in the cytoplasm. The enzyme catalyses Exonucleolytic cleavage that removes extra residues from the 3'-terminus of tRNA to produce 5'-mononucleotides.. Its function is as follows. Exonuclease involved in the 3' processing of various precursor tRNAs. Initiates hydrolysis at the 3'-terminus of an RNA molecule and releases 5'-mononucleotides. The protein is Ribonuclease D of Acidiphilium cryptum (strain JF-5).